The following is a 110-amino-acid chain: Phosphoribosyl-ATP pyrophosphatase (110 aa).

It belongs to the PRA-PH family.

The protein resides in the cytoplasm. It carries out the reaction 1-(5-phospho-beta-D-ribosyl)-ATP + H2O = 1-(5-phospho-beta-D-ribosyl)-5'-AMP + diphosphate + H(+). Its pathway is amino-acid biosynthesis; L-histidine biosynthesis; L-histidine from 5-phospho-alpha-D-ribose 1-diphosphate: step 2/9. The protein is Phosphoribosyl-ATP pyrophosphatase of Pseudomonas fluorescens (strain SBW25).